A 349-amino-acid polypeptide reads, in one-letter code: Core protein VP7 (349 aa).

Asn287 carries N-linked (GlcNAc...) asparagine; by host glycosylation.

It belongs to the orbivirus VP7 family. As to quaternary structure, homotrimer that assemble in a complex of 260 capsomers on an inner scaffold composed of VP3.

Its subcellular location is the virion. Its function is as follows. The VP7 protein is one of the five proteins (with VP1, VP3, VP4, and VP6) which form the inner capsid of the virus. The polypeptide is Core protein VP7 (Segment-7) (Antilocapra americana (Pronghorn)).